The primary structure comprises 86 residues: MAMHLWLVTLTLVPLLGMDRELMVSAGSLVFPRMPFCEHMAELPNCPQTPNLICGTDGLTYENECHLCLTRMKTMKDIQIMKDGQC.

The N-terminal stretch at 1–26 (MAMHLWLVTLTLVPLLGMDRELMVSA) is a signal peptide. One can recognise a Kazal-like domain in the interval 31 to 86 (FPRMPFCEHMAELPNCPQTPNLICGTDGLTYENECHLCLTRMKTMKDIQIMKDGQC). 3 disulfide bridges follow: C37-C68, C46-C65, and C54-C86.

As to expression, expressed in the intestinal tract.

Its subcellular location is the secreted. The protein is Serine protease inhibitor Kazal-type 4 (Spink4) of Mus musculus (Mouse).